The following is a 55-amino-acid chain: Large ribosomal subunit protein bL32 (55 aa).

The span at 1 to 19 (MAVPKFKKSRANTRARRSQ) shows a compositional bias: basic residues. The interval 1-22 (MAVPKFKKSRANTRARRSQWKA) is disordered.

This sequence belongs to the bacterial ribosomal protein bL32 family.

The protein is Large ribosomal subunit protein bL32 of Corynebacterium urealyticum (strain ATCC 43042 / DSM 7109).